The sequence spans 108 residues: UPF0060 membrane protein SA2130 (108 aa).

4 helical membrane-spanning segments follow: residues 5–25 (IFIFILAGLCEIGGGYLIWLW), 31–51 (SSLVGLIGGAILMLYGVIATF), 60–80 (VYAAYGGVFIIMSLIFAMVVD), and 86–106 (KYDVIGAIICIVGVLVMLLPS).

It belongs to the UPF0060 family.

The protein resides in the cell membrane. The chain is UPF0060 membrane protein SA2130 from Staphylococcus aureus (strain N315).